The primary structure comprises 218 residues: Phosphoribosylformylglycinamidine synthase subunit PurQ (218 aa).

The 217-residue stretch at 2-218 (SIAVLRFPGT…GARMLRGLAC (217 aa)) folds into the Glutamine amidotransferase type-1 domain. Cys86 acts as the Nucleophile in catalysis. Catalysis depends on residues His195 and Glu197.

As to quaternary structure, part of the FGAM synthase complex composed of 1 PurL, 1 PurQ and 2 PurS subunits.

The protein localises to the cytoplasm. It catalyses the reaction N(2)-formyl-N(1)-(5-phospho-beta-D-ribosyl)glycinamide + L-glutamine + ATP + H2O = 2-formamido-N(1)-(5-O-phospho-beta-D-ribosyl)acetamidine + L-glutamate + ADP + phosphate + H(+). The enzyme catalyses L-glutamine + H2O = L-glutamate + NH4(+). It functions in the pathway purine metabolism; IMP biosynthesis via de novo pathway; 5-amino-1-(5-phospho-D-ribosyl)imidazole from N(2)-formyl-N(1)-(5-phospho-D-ribosyl)glycinamide: step 1/2. In terms of biological role, part of the phosphoribosylformylglycinamidine synthase complex involved in the purines biosynthetic pathway. Catalyzes the ATP-dependent conversion of formylglycinamide ribonucleotide (FGAR) and glutamine to yield formylglycinamidine ribonucleotide (FGAM) and glutamate. The FGAM synthase complex is composed of three subunits. PurQ produces an ammonia molecule by converting glutamine to glutamate. PurL transfers the ammonia molecule to FGAR to form FGAM in an ATP-dependent manner. PurS interacts with PurQ and PurL and is thought to assist in the transfer of the ammonia molecule from PurQ to PurL. This Wolinella succinogenes (strain ATCC 29543 / DSM 1740 / CCUG 13145 / JCM 31913 / LMG 7466 / NCTC 11488 / FDC 602W) (Vibrio succinogenes) protein is Phosphoribosylformylglycinamidine synthase subunit PurQ.